A 173-amino-acid polypeptide reads, in one-letter code: Co-chaperone protein HscB homolog (173 aa).

Residues 5–77 (CHFAQFDLQP…PRRALYLLTL (73 aa)) form the J domain.

It belongs to the HscB family. As to quaternary structure, interacts with HscA and stimulates its ATPase activity.

Functionally, co-chaperone involved in the maturation of iron-sulfur cluster-containing proteins. Seems to help targeting proteins to be folded toward HscA. The polypeptide is Co-chaperone protein HscB homolog (Pseudomonas paraeruginosa (strain DSM 24068 / PA7) (Pseudomonas aeruginosa (strain PA7))).